The sequence spans 2581 residues: Chromodomain-helicase-DNA-binding protein 8 (2581 aa).

Disordered stretches follow at residues 22–114 (DDSF…QTST), 253–283 (VKGS…TQGE), 349–392 (QKIQ…SPGQ), 429–582 (ALSS…QVKR), and 596–615 (DEEE…PILP). 2 stretches are compositionally biased toward polar residues: residues 42 to 51 (SLDSLDQMNQ) and 94 to 114 (DYTT…QTST). Over residues 255–267 (GSAPAGNPGATGP) the composition is skewed to low complexity. Over residues 355–370 (PQPPSSQPQPQQPPST) the composition is skewed to pro residues. Ser-432 is subject to Phosphoserine. 2 stretches are compositionally biased toward basic and acidic residues: residues 445 to 462 (GMEE…EKAN) and 493 to 516 (RPEE…EEKP). Phosphoserine is present on residues Ser-553 and Ser-562. A compositionally biased stretch (basic residues) spans 572–582 (QKRRSNRQVKR). Lys-609 is covalently cross-linked (Glycyl lysine isopeptide (Lys-Gly) (interchain with G-Cter in SUMO)). 2 Chromo domains span residues 642-709 (AIVD…AQMR) and 724-790 (VEVD…RVNR). In terms of domain architecture, Helicase ATP-binding spans 823-997 (LFNWYNRQNC…FSLLHFLEPS (175 aa)). ATP is bound at residue 836 to 843 (DEMGLGKT). A DEAH box motif is present at residues 948–951 (DEAH). The 152-residue stretch at 1137–1288 (LIDKLLPKLK…KAVLQSMSGR (152 aa)) folds into the Helicase C-terminal domain. Phosphoserine occurs at positions 1420 and 1424. Residues 1692-1712 (EDPEYKPLQGPPKDQDDEGDP) form a disordered region. Residues 1789–2302 (IARREKQQRW…LVELEVECME (514 aa)) are interaction with FAM124B. Residues Ser-1976 and Ser-1978 each carry the phosphoserine modification. The disordered stretch occupies residues 1991-2116 (SRTASPLPLR…TDQSRSKLYD (126 aa)). Residue Thr-1993 is modified to Phosphothreonine. Residues Ser-1995 and Ser-2008 each carry the phosphoserine modification. The segment covering 2011-2021 (ETATQVPSLES) has biased composition (polar residues). Lys-2025 participates in a covalent cross-link: Glycyl lysine isopeptide (Lys-Gly) (interchain with G-Cter in SUMO2). Ser-2046 is modified (phosphoserine). A Phosphothreonine modification is found at Thr-2051. The segment covering 2064–2073 (EDEDDSDSEL) has biased composition (acidic residues). Residues Ser-2069 and Ser-2071 each carry the phosphoserine modification. The span at 2076 to 2095 (SKLSPSSSSSSSSSSSSSST) shows a compositional bias: low complexity. The span at 2103 to 2116 (EEKLTDQSRSKLYD) shows a compositional bias: basic and acidic residues. Phosphoserine occurs at positions 2182, 2200, and 2202. The disordered stretch occupies residues 2189–2229 (GILGPGNHLLDSPSLTPGEYGDSPVPTPRSSSAASMAEEEA). Thr-2204 carries the phosphothreonine modification. Position 2211 is a phosphoserine (Ser-2211). A Phosphothreonine modification is found at Thr-2215. A compositionally biased stretch (low complexity) spans 2218 to 2229 (SSSAASMAEEEA). A Phosphoserine modification is found at Ser-2223. Lys-2256 is covalently cross-linked (Glycyl lysine isopeptide (Lys-Gly) (interchain with G-Cter in SUMO2)). The interval 2481–2581 (PSSPHVDSST…NSDSSEDADD (101 aa)) is disordered. The span at 2492–2510 (LHHHHHHPHPHHHHHHHPG) shows a compositional bias: basic residues. Ser-2519 is subject to Phosphoserine. Positions 2519-2528 (SPVTTASGTT) are enriched in polar residues. The segment covering 2536 to 2550 (PEEDDDEDEEDDDDL) has biased composition (acidic residues).

It belongs to the SNF2/RAD54 helicase family. CHD8 subfamily. As to quaternary structure, interacts with p53/TP53, histone H1, CTNNB1, CTCF and PIAS3. Component of some MLL1/MLL complex, at least composed of the core components KMT2A/MLL1, ASH2L, HCFC1/HCF1, WDR5 and RBBP5, as well as the facultative components BACC1, CHD8, E2F6, HSP70, INO80C, KANSL1, LAS1L, MAX, MCRS1, MGA, KAT8/MOF, PELP1, PHF20, PRP31, RING2, RUVB1/TIP49A, RUVB2/TIP49B, SENP3, TAF1, TAF4, TAF6, TAF7, TAF9 and TEX10. Interacts with CHD7. Interacts with FAM124B. Interacts with TLK2. Interacts with HNRNPL in an RNA-dependent manner. Post-translationally, sumoylated.

Its subcellular location is the nucleus. The enzyme catalyses ATP + H2O = ADP + phosphate + H(+). ATP-dependent chromatin-remodeling factor, it slides nucleosomes along DNA; nucleosome sliding requires ATP. Acts as a transcription repressor by remodeling chromatin structure and recruiting histone H1 to target genes. Suppresses p53/TP53-mediated apoptosis by recruiting histone H1 and preventing p53/TP53 transactivation activity. Acts as a negative regulator of Wnt signaling pathway by regulating beta-catenin (CTNNB1) activity. Negatively regulates CTNNB1-targeted gene expression by being recruited specifically to the promoter regions of several CTNNB1 responsive genes. Involved in both enhancer blocking and epigenetic remodeling at chromatin boundary via its interaction with CTCF. Acts as a suppressor of STAT3 activity by suppressing the LIF-induced STAT3 transcriptional activity. Also acts as a transcription activator via its interaction with ZNF143 by participating in efficient U6 RNA polymerase III transcription. Regulates alternative splicing of a core group of genes involved in neuronal differentiation, cell cycle and DNA repair. Enables H3K36me3-coupled transcription elongation and co-transcriptional RNA processing likely via interaction with HNRNPL. In Homo sapiens (Human), this protein is Chromodomain-helicase-DNA-binding protein 8.